Reading from the N-terminus, the 504-residue chain is Pre-mRNA-processing factor 19 (504 aa).

S2 carries the post-translational modification N-acetylserine. One can recognise a U-box domain in the interval 2 to 73 (SLICSISNEV…KPPSATSIPA (72 aa)). A may mediate interaction with PSMC5 region spans residues 68-223 (ATSIPAILKA…VGLHSASIPG (156 aa)). N6-acetyllysine occurs at positions 122, 179, 244, and 261. The stretch at 219–259 (ASIPGILALDLCPSDTNKILTGGADKNVVVFDKSSEQILAT) is one WD 1 repeat. WD repeat units follow at residues 262–301 (GHTK…CVQV), 304–345 (AHES…TKVT), 348–387 (TSGC…NVAN), 390–429 (GHSG…NFKT), 433–472 (DNNF…LHFT), and 473–503 (EHSG…KFYS).

Belongs to the WD repeat PRP19 family. As to quaternary structure, homotetramer. Component of activated, catalytic and post-catalytic spliceosomes. Component of the Prp19 complex/PRP19C/Nineteen complex/NTC and related complexes described as PRP19-CDC5L splicing complex and PSO4 complex. A homotetramer of PRPF19, CDC5L, PLRG1 and BCAS2 constitute the core of those complexes. The interaction with CDC5L, PLRG1 and BCAS2 is direct within this core complex. At least three less stably associated proteins CTNNBL1, CWC15 and HSPA8 are found in the Prp19 complex. The Prp19 complex associates with the spliceosome during its assembly and remodeling recruiting additional proteins. Component of the XAB2 complex, a multimeric protein complex composed of XAB2, PRPF19, AQR, ZNF830, ISY1, and PPIE. Interacts with CWC22 and EIF4A3 in an RNA-independent manner. Interacts with RPA1 and RPA2; the PRP19-CDC5L complex is recruited to the sites of DNA repair where it interacts with the replication protein A complex (RPA). Interacts with SETMAR; required for SETMAR recruitment to site of DNA damage. Interacts with U2AF2; the interaction is direct and recruits the Prp19 complex to RNA polymerase II C-terminal domain (CTD) and the pre-mRNA. Interacts with PRPF3. Interacts with APEX1, DNTT and PSMB4. Interacts with PSMC5. Interacts with KNSTRN. Interacts (via N-terminus) with CDC5L. Interacts with KHDC4. Interacts with USB1. Interacts with DDX41.

The protein localises to the nucleus. Its subcellular location is the nucleoplasm. It localises to the cytoplasm. The protein resides in the cytoskeleton. It is found in the spindle. The protein localises to the lipid droplet. It carries out the reaction S-ubiquitinyl-[E2 ubiquitin-conjugating enzyme]-L-cysteine + [acceptor protein]-L-lysine = [E2 ubiquitin-conjugating enzyme]-L-cysteine + N(6)-ubiquitinyl-[acceptor protein]-L-lysine.. Its pathway is protein modification; protein ubiquitination. Functionally, ubiquitin-protein ligase which is a core component of several complexes mainly involved pre-mRNA splicing and DNA repair. Required for pre-mRNA splicing as component of the spliceosome. Core component of the PRP19C/Prp19 complex/NTC/Nineteen complex which is part of the spliceosome and participates in its assembly, its remodeling and is required for its activity. During assembly of the spliceosome, mediates 'Lys-63'-linked polyubiquitination of the U4 spliceosomal protein PRPF3. Ubiquitination of PRPF3 allows its recognition by the U5 component PRPF8 and stabilizes the U4/U5/U6 tri-snRNP spliceosomal complex. Recruited to RNA polymerase II C-terminal domain (CTD) and the pre-mRNA, it may also couple the transcriptional and spliceosomal machineries. The XAB2 complex, which contains PRPF19, is also involved in pre-mRNA splicing, transcription and transcription-coupled repair. Beside its role in pre-mRNA splicing PRPF19, as part of the PRP19-CDC5L complex, plays a role in the DNA damage response/DDR. It is recruited to the sites of DNA damage by the RPA complex where PRPF19 directly ubiquitinates RPA1 and RPA2. 'Lys-63'-linked polyubiquitination of the RPA complex allows the recruitment of the ATR-ATRIP complex and the activation of ATR, a master regulator of the DNA damage response. May also play a role in DNA double-strand break (DSB) repair by recruiting the repair factor SETMAR to altered DNA. As part of the PSO4 complex may also be involved in the DNA interstrand cross-links/ICLs repair process. In addition, may also mediate 'Lys-48'-linked polyubiquitination of substrates and play a role in proteasomal degradation. May play a role in the biogenesis of lipid droplets. May play a role in neural differentiation possibly through its function as part of the spliceosome. This chain is Pre-mRNA-processing factor 19 (PRPF19), found in Bos taurus (Bovine).